A 487-amino-acid chain; its full sequence is Kynureninase 1 (487 aa).

Pyridoxal 5'-phosphate is bound by residues Leu-147, Thr-148, 175 to 178, Ser-232, Asp-261, His-264, and Tyr-286; that span reads FPSD. Lys-287 carries the post-translational modification N6-(pyridoxal phosphate)lysine. Pyridoxal 5'-phosphate contacts are provided by Trp-327 and Asn-355.

This sequence belongs to the kynureninase family. As to quaternary structure, homodimer. Pyridoxal 5'-phosphate serves as cofactor.

It is found in the cytoplasm. The catalysed reaction is L-kynurenine + H2O = anthranilate + L-alanine + H(+). It catalyses the reaction 3-hydroxy-L-kynurenine + H2O = 3-hydroxyanthranilate + L-alanine + H(+). Its pathway is amino-acid degradation; L-kynurenine degradation; L-alanine and anthranilate from L-kynurenine: step 1/1. The protein operates within cofactor biosynthesis; NAD(+) biosynthesis; quinolinate from L-kynurenine: step 2/3. Its function is as follows. Catalyzes the cleavage of L-kynurenine (L-Kyn) and L-3-hydroxykynurenine (L-3OHKyn) into anthranilic acid (AA) and 3-hydroxyanthranilic acid (3-OHAA), respectively. The polypeptide is Kynureninase 1 (bna5-1) (Aspergillus oryzae (strain ATCC 42149 / RIB 40) (Yellow koji mold)).